A 98-amino-acid polypeptide reads, in one-letter code: Co-chaperonin GroES (98 aa).

Belongs to the GroES chaperonin family. In terms of assembly, heptamer of 7 subunits arranged in a ring. Interacts with the chaperonin GroEL.

It is found in the cytoplasm. In terms of biological role, together with the chaperonin GroEL, plays an essential role in assisting protein folding. The GroEL-GroES system forms a nano-cage that allows encapsulation of the non-native substrate proteins and provides a physical environment optimized to promote and accelerate protein folding. GroES binds to the apical surface of the GroEL ring, thereby capping the opening of the GroEL channel. The sequence is that of Co-chaperonin GroES from Coprothermobacter proteolyticus (strain ATCC 35245 / DSM 5265 / OCM 4 / BT).